The following is a 407-amino-acid chain: Argininosuccinate synthase (407 aa).

ATP contacts are provided by residues 11 to 19 (AYSGGLDTS) and alanine 38. Tyrosine 89 and serine 94 together coordinate L-citrulline. Position 119 (glycine 119) interacts with ATP. L-aspartate contacts are provided by threonine 121, asparagine 125, and aspartate 126. Asparagine 125 provides a ligand contact to L-citrulline. Arginine 129, serine 180, serine 189, glutamate 265, and tyrosine 277 together coordinate L-citrulline.

This sequence belongs to the argininosuccinate synthase family. Type 1 subfamily. In terms of assembly, homotetramer.

The protein localises to the cytoplasm. It carries out the reaction L-citrulline + L-aspartate + ATP = 2-(N(omega)-L-arginino)succinate + AMP + diphosphate + H(+). The protein operates within amino-acid biosynthesis; L-arginine biosynthesis; L-arginine from L-ornithine and carbamoyl phosphate: step 2/3. In Magnetococcus marinus (strain ATCC BAA-1437 / JCM 17883 / MC-1), this protein is Argininosuccinate synthase.